A 600-amino-acid chain; its full sequence is Spastin (600 aa).

Residues 1–39 (MNSPGGRNDKKKPVTPAAETGPGSPTTPPSTETQVVLAP) are disordered. At 1–53 (MNSPGGRNDKKKPVTPAAETGPGSPTTPPSTETQVVLAPPSPHKRNLHLFSYP) the chain is on the cytoplasmic side. Residues 15-33 (TPAAETGPGSPTTPPSTET) are compositionally biased toward low complexity. The segment at residues 54-74 (LLAVFSLLRFLAFQLGLLFVW) is an intramembrane region (helical). The Cytoplasmic portion of the chain corresponds to 75–600 (CCELLSRSVM…WNQDFGDTTV (526 aa)). Residues 110 to 185 (YHQQAFQYIS…IMAKDRLQLL (76 aa)) enclose the MIT domain. The segment at 213-294 (GLLKPEKGAV…KPATPTTAVR (82 aa)) is disordered. Over residues 216-228 (KPEKGAVPKKKDP) the composition is skewed to basic and acidic residues. Polar residues predominate over residues 253–291 (PNCTSVPTSARQAGAHTPSNRGATGKNNTRTNKPATPTT). 366 to 373 (GPPGNGKT) contacts ATP.

It belongs to the AAA ATPase family. Spastin subfamily. Homohexamer. The homohexamer is stabilized by ATP-binding. The homohexamer may adopt a ring conformation through which microtubules pass prior to being severed. Interacts with microtubules.

The protein localises to the membrane. It is found in the cytoplasm. Its subcellular location is the cytoskeleton. The protein resides in the microtubule organizing center. It localises to the centrosome. The protein localises to the perinuclear region. It is found in the nucleus. It carries out the reaction n ATP + n H2O + a microtubule = n ADP + n phosphate + (n+1) alpha/beta tubulin heterodimers.. ATP-dependent microtubule severing protein that specifically recognizes and cuts microtubules that are polyglutamylated. Preferentially recognizes and acts on microtubules decorated with short polyglutamate tails: severing activity increases as the number of glutamates per tubulin rises from one to eight, but decreases beyond this glutamylation threshold. Microtubule severing promotes reorganization of cellular microtubule arrays and the release of microtubules from the centrosome following nucleation. Required for membrane traffic from the endoplasmic reticulum (ER) to the Golgi and for completion of the abscission stage of cytokinesis. Also plays a role in axon growth and the formation of axonal branches. The chain is Spastin from Xenopus laevis (African clawed frog).